We begin with the raw amino-acid sequence, 581 residues long: Multidrug and toxin extrusion protein 2 (581 aa).

Residues 1–33 (MDSLQDTVPLDHGGCCPALSRLVPRGFGTEMWT) lie on the Cytoplasmic side of the membrane. Residues 34 to 54 (LFALSGPLFLFQVLTFMIYIV) form a helical membrane-spanning segment. Residues 55 to 66 (STVFCGHLGKVE) lie on the Extracellular side of the membrane. The chain crosses the membrane as a helical span at residues 67-87 (LASVTLAVAFVNVCGVSVGVG). Residues 88-119 (LSSACDTLMSQSFGSPNKKHVGVILQRGALVL) are Cytoplasmic-facing. Residues 120 to 140 (LLCCLPCWALFLNTQHILLLF) form a helical membrane-spanning segment. Over 141–153 (RQDPEVSRLTQDY) the chain is Extracellular. Residues 154 to 174 (VMIFIPGLPVIFLYNLLAKYL) form a helical membrane-spanning segment. At 175–183 (QNQKITWPQ) the chain is on the cytoplasmic side. Residues 184–204 (VLSGVVGNCVNGVANYALVSV) traverse the membrane as a helical segment. Residues 205–212 (LNLGVRGS) lie on the Extracellular side of the membrane. The helical transmembrane segment at 213–233 (AYANIISQFAQTVFLLLYIVL) threads the bilayer. Residues 234-253 (KKLHLETWAGWSSQCLQDWG) are Cytoplasmic-facing. Residues 254–273 (PFFSLAVPSMLMICVEWWAY) form a helical membrane-spanning segment. Residues 274–317 (EIGSFLMGLLSVVDLSAQAVIYEVATVTYMRHSHHLAYTAHVAR) are Extracellular-facing. Residues 318–338 (IPLGLSIGVCVRVGMALGAAD) form a helical membrane-spanning segment. Residues 339 to 346 (TVQAKRSA) are Cytoplasmic-facing. A helical membrane pass occupies residues 347–367 (VSGVLSIVGISLVLGTLISIL). The Extracellular portion of the chain corresponds to 368 to 380 (KNQLGHIFTNDED). Residues 381-401 (VIALVSQVLPVYSVFHVFEAI) traverse the membrane as a helical segment. Residues 402-420 (CCVYGGVLRGTGKQAFGAA) are Cytoplasmic-facing. A helical membrane pass occupies residues 421 to 441 (VNAITYYIIGLPLGILLTFVV). Topologically, residues 442-444 (RMR) are extracellular. Residues 445–465 (IMGLWLGMLACVFLATAAFVA) form a helical membrane-spanning segment. Residues 466–557 (YTARLDWKLA…LSVKQLVIRR (92 aa)) are Cytoplasmic-facing. The interval 481–513 (KHSGQQQQQQRAESTATRSGPEKAVLSSVATGS) is disordered. Residues 558-578 (GAALGAASATLMVGLTVRILA) traverse the membrane as a helical segment. Residues 579–581 (TRH) are Extracellular-facing.

It belongs to the multi antimicrobial extrusion (MATE) (TC 2.A.66.1) family.

It is found in the cell membrane. The protein resides in the apical cell membrane. It catalyses the reaction thiamine(out) + H(+)(in) = thiamine(in) + H(+)(out). The enzyme catalyses estrone 3-sulfate(in) + H(+)(out) = estrone 3-sulfate(out) + H(+)(in). The catalysed reaction is creatinine(in) + H(+)(out) = creatinine(out) + H(+)(in). Functionally, multidrug efflux pump that functions as a H(+)/organic cation antiporter. Mediates the efflux of cationic compounds, such as the model cations, tetraethylammonium (TEA) and 1-methyl-4-phenylpyridinium (MPP+), the platinum-based drug oxaliplatin or weak bases that are positively charged at physiological pH, cimetidine or the antidiabetic drug metformin. Mediates the efflux of the endogenous compounds creatinine, thiamine and estrone-3-sulfate. Plays a physiological role in the excretion of drugs, toxins and endogenous metabolites through the kidney. In Pongo abelii (Sumatran orangutan), this protein is Multidrug and toxin extrusion protein 2 (SLC47A2).